The sequence spans 336 residues: Protein SGT1 homolog (336 aa).

At Ala2 the chain carries N-acetylalanine. TPR repeat units follow at residues 11–44 (SQRL…NPDD), 45–78 (AQYY…NPNN), and 79–112 (CTAL…DSTD). Residues 140–229 (QSKIKYDWYQ…PEAVRWEKLE (90 aa)) enclose the CS domain. Position 236 is a phosphothreonine (Thr236). An SGS domain is found at 247 to 336 (MYPSSSHYTR…PPDDMEWKQY (90 aa)). Position 252 is a phosphoserine (Ser252). The residue at position 255 (Thr255) is a Phosphothreonine. A Glycyl lysine isopeptide (Lys-Gly) (interchain with G-Cter in SUMO1); alternate cross-link involves residue Lys266. Lys266 is covalently cross-linked (Glycyl lysine isopeptide (Lys-Gly) (interchain with G-Cter in SUMO2); alternate). Ser302 is modified (phosphoserine).

It belongs to the SGT1 family. As to quaternary structure, probably associates with SCF (SKP1-CUL1-F-box protein) complex through interaction with SKP1. Interacts with S100A6. Interacts with HSP90. In terms of processing, phosphorylated at Ser-252 and Ser-302, dephosphorylation promotes nuclear translocation, most likely due to disruption of the SUGT1-HSP90 complex.

The protein localises to the cytoplasm. It is found in the nucleus. Functionally, may play a role in ubiquitination and subsequent proteasomal degradation of target proteins. The chain is Protein SGT1 homolog from Mus musculus (Mouse).